The chain runs to 278 residues: Envelope glycoprotein L (278 aa).

The first 32 residues, 1 to 32 (MCRRPDCGFSFSPGPVILLWCCLLLSIVSSAA), serve as a signal peptide directing secretion. The 214-residue stretch at 43–256 (VPAECPELTR…DKYYAGLPPE (214 aa)) folds into the gL betaherpesvirus-type domain. C154 and C159 are oxidised to a cystine.

Belongs to the herpesviridae glycoprotein L (gL) family. Betaherpesvirinae gL subfamily. Interacts with glycoprotein H (gH); this interaction is necessary for the correct processing and cell surface expression of gH. Forms the envelope pentamer complex (PC) composed of gH, gL, UL128, UL130, and UL131A. The pentamer interacts with host NRP2. Forms the envelope trimer complex composed of gH, gL, and gO. The trimer interacts with host PDGFRA. The trimer also interacts with host EPHA2.

Its subcellular location is the virion membrane. It localises to the host cell membrane. It is found in the host Golgi apparatus. The protein resides in the host trans-Golgi network. The heterodimer glycoprotein H-glycoprotein L is required for the fusion of viral and plasma membranes leading to virus entry into the host cell. Acts as a functional inhibitor of gH and maintains gH in an inhibited form. Upon binding to host integrins, gL dissociates from gH leading to activation of the viral fusion glycoproteins gB and gH. In human cytomegalovirus, forms two distincts complexes to mediate viral entry, a trimer and a pentamer at the surface of the virion envelope. The gH-gL-gO trimer is required for infection in fibroblasts by interacting with host PDGFRA, and in glioblastoma cells by interacting with host EPHA2. The gH-gL-UL128-UL130-UL131A pentamer is essential for viral entry in epithelial, endothelial and myeloid cells via interaction with host NRP2. The protein is Envelope glycoprotein L of Human cytomegalovirus (strain 119) (HHV-5).